The chain runs to 524 residues: Coronin-2A (524 aa).

WD repeat units follow at residues 80–120 (GHRG…LTRN), 130–170 (GHAR…SVIA), 178–217 (CHQDVILSMSFNTNGSLLATTCKDRKIRIVDPRLGIVLQE), 220–263 (YKGH…VPLT), and 269–308 (GSSGVLFPFFDSDTSMLYIVGKGDGNIRYYEVSMEKPHLT). The tract at residues 403-436 (LLDSQTLPPERPLSNSMVQVSPQPLEPMKQPAED) is disordered. Polar residues predominate over residues 404 to 424 (LDSQTLPPERPLSNSMVQVSP). A coiled-coil region spans residues 484–523 (QMFYRQQEEIRRLRELLIQREVQTKQLELEIKNLRMALGQ).

Belongs to the WD repeat coronin family. In terms of assembly, binds actin. Component of the N-Cor repressor complex, at least composed of NCOR1, NCOR2, HDAC3, TBL1X, TBL1R, CORO2A and GPS2.

This Mus musculus (Mouse) protein is Coronin-2A (Coro2a).